Reading from the N-terminus, the 132-residue chain is Small ribosomal subunit protein uS8 (132 aa).

Belongs to the universal ribosomal protein uS8 family. Part of the 30S ribosomal subunit. Contacts proteins S5 and S12.

One of the primary rRNA binding proteins, it binds directly to 16S rRNA central domain where it helps coordinate assembly of the platform of the 30S subunit. This is Small ribosomal subunit protein uS8 from Xanthomonas oryzae pv. oryzae (strain MAFF 311018).